We begin with the raw amino-acid sequence, 491 residues long: uncharacterized protein (491 aa).

Positions 1 to 92 (MSFVIASPEA…GGGSYASAEI (92 aa)) constitute a PE domain. Disordered stretches follow at residues 114 to 156 (PLVG…AGGA), 376 to 400 (AGGSGGSGAPGSVSSGGVGGAGNPG), and 419 to 491 (AGQG…GPDG). The segment covering 128–145 (GQPGGDGGILWGNGGNGG) has biased composition (gly residues). The span at 432–480 (GGPGGVGGHGGTAILFGDGGAGGAGAAGGPGTPDGAAGPGGSGGTGGLL) shows a compositional bias: gly residues.

The protein belongs to the mycobacterial PE family. PGRS subfamily.

This is an uncharacterized protein from Mycobacterium bovis (strain ATCC BAA-935 / AF2122/97).